A 407-amino-acid polypeptide reads, in one-letter code: Lysosome-associated membrane glycoprotein 1 (407 aa).

The signal sequence occupies residues 1 to 21 (MAAPGARRPLLLLLLAGLAHS). The first lumenal domain stretch occupies residues 22–189 (APALFEVKDN…SKEETRCPQD (168 aa)). The Lumenal segment spans residues 22–371 (APALFEVKDN…VEECVQDGNN (350 aa)). Residues Asn-32, Asn-59, Asn-71, Asn-79, Asn-102, Asn-116, Asn-125, Asn-145, Asn-160, and Asn-178 are each glycosylated (N-linked (GlcNAc...) asparagine). A disulfide bridge links Cys-36 with Cys-75. A disulfide bridge links Cys-150 with Cys-186. Residues 180-211 (SKEETRCPQDQPSPTTGPPSPSPPLVPTNPSV) form a disordered region. The tract at residues 190–219 (QPSPTTGPPSPSPPLVPTNPSVSKYNVTGD) is hinge. Over residues 194-206 (TTGPPSPSPPLVP) the composition is skewed to pro residues. Asn-215, Asn-220, Asn-233, Asn-241, Asn-271, Asn-283, Asn-297, and Asn-312 each carry an N-linked (GlcNAc...) asparagine glycan. A second lumenal domain region spans residues 220–371 (NGTCLLASMA…VEECVQDGNN (152 aa)). Cys-223 and Cys-260 are disulfide-bonded. A disulfide bond links Cys-328 and Cys-365. Residues 372–395 (MLIPIAVGGALAGLVLIVLIAYLI) form a helical membrane-spanning segment. Topologically, residues 396-407 (GRKRSHAGYQTI) are cytoplasmic.

It belongs to the LAMP family. Interacts with ABCB9; this interaction strongly stabilizes ABCB9 and protects ABCB9 against lysosomal degradation. Interacts with FURIN. Interacts with TMEM175; inhibiting the proton channel activity of TMEM175. Post-translationally, O- and N-glycosylated; some of the N-glycans attached to LAMP-1 are polylactosaminoglycans.

The protein resides in the lysosome membrane. Its subcellular location is the endosome membrane. It is found in the late endosome membrane. It localises to the cell membrane. The protein localises to the cytolytic granule membrane. Functionally, lysosomal membrane glycoprotein which plays an important role in lysosome biogenesis, lysosomal pH regulation, autophagy and cholesterol homeostasis. Acts as an important regulator of lysosomal lumen pH regulation by acting as a direct inhibitor of the proton channel TMEM175, facilitating lysosomal acidification for optimal hydrolase activity. Also plays an important role in NK-cells cytotoxicity. Mechanistically, participates in cytotoxic granule movement to the cell surface and perforin trafficking to the lytic granule. In addition, protects NK-cells from degranulation-associated damage induced by their own cytotoxic granule content. Presents carbohydrate ligands to selectins. This chain is Lysosome-associated membrane glycoprotein 1 (Lamp1), found in Rattus norvegicus (Rat).